A 396-amino-acid chain; its full sequence is Putative transposase y4rJ (396 aa).

This sequence belongs to the transposase 20 family.

This is Putative transposase y4rJ from Sinorhizobium fredii (strain NBRC 101917 / NGR234).